The sequence spans 66 residues: Stress-induced protein KIN1 (66 aa).

Over residues 1 to 13 (MSETNKNAFQAGQ) the composition is skewed to polar residues. The interval 1–52 (MSETNKNAFQAGQTAGKAEEKSNVLLDKAKDAAAGAGAGAQQAGKSVSDAAA) is disordered. Positions 17-31 (KAEEKSNVLLDKAKD) are enriched in basic and acidic residues. 2 repeats span residues 31 to 35 (DAAAG) and 49 to 53 (DAAAG). Over residues 32–45 (AAAGAGAGAQQAGK) the composition is skewed to low complexity.

The sequence is that of Stress-induced protein KIN1 (KIN1) from Arabidopsis thaliana (Mouse-ear cress).